The sequence spans 394 residues: Alanine--glyoxylate aminotransferase (394 aa).

Residues 76–78 (AGH), Ser153, and Gln204 contribute to the pyridoxal 5'-phosphate site. Residue Ser153 participates in substrate binding. Lys205 carries the post-translational modification N6-(pyridoxal phosphate)lysine. Pyridoxal 5'-phosphate-binding residues include Tyr256 and Thr259. Arg356 is a substrate binding site.

This sequence belongs to the class-V pyridoxal-phosphate-dependent aminotransferase family. As to quaternary structure, homodimer. The cofactor is pyridoxal 5'-phosphate.

The protein localises to the peroxisome. The enzyme catalyses glyoxylate + L-alanine = glycine + pyruvate. It catalyses the reaction (2S)-2-aminobutanoate + glyoxylate = 2-oxobutanoate + glycine. The catalysed reaction is glyoxylate + L-phenylalanine = 3-phenylpyruvate + glycine. It carries out the reaction glyoxylate + L-serine = 3-hydroxypyruvate + glycine. The enzyme catalyses 2-oxobutanoate + L-alanine = (2S)-2-aminobutanoate + pyruvate. It catalyses the reaction L-phenylalanine + pyruvate = 3-phenylpyruvate + L-alanine. The catalysed reaction is L-serine + pyruvate = 3-hydroxypyruvate + L-alanine. Its function is as follows. Catalyzes the pyridoxal 5'-phosphate-dependent transamination of alanine with glyoxylate as an amino group acceptor. Can also catalyze, although with much less efficiency, the transamination of amino-butyrate, phenylalanine and serine with glyoxylate or pyruvate as an amino group acceptor. Does not catalyze the transamination of both 3-hydroxykynurenine and L-kynurenine. May play a role in the detoxification of glyoxylate, a toxic plant metabolite from the fly diet. In Drosophila melanogaster (Fruit fly), this protein is Alanine--glyoxylate aminotransferase.